A 503-amino-acid chain; its full sequence is Cytochrome P450 11B1, mitochondrial (503 aa).

Residues methionine 1–leucine 24 constitute a mitochondrion transit peptide. Residue cysteine 450 participates in heme binding.

This sequence belongs to the cytochrome P450 family. Requires heme as cofactor.

The protein resides in the mitochondrion inner membrane. The catalysed reaction is a steroid + 2 reduced [adrenodoxin] + O2 + 2 H(+) = an 11beta-hydroxysteroid + 2 oxidized [adrenodoxin] + H2O. The enzyme catalyses 11-deoxycortisol + 2 reduced [adrenodoxin] + O2 + 2 H(+) = cortisol + 2 oxidized [adrenodoxin] + H2O. It carries out the reaction 21-hydroxyprogesterone + 2 reduced [adrenodoxin] + O2 + 2 H(+) = corticosterone + 2 oxidized [adrenodoxin] + H2O. It catalyses the reaction 21-hydroxyprogesterone + 2 reduced [adrenodoxin] + O2 + 2 H(+) = 18-hydroxy-11-deoxycorticosterone + 2 oxidized [adrenodoxin] + H2O. The catalysed reaction is 21-hydroxyprogesterone + 2 reduced [adrenodoxin] + O2 + 2 H(+) = 19-hydroxy-11-deoxycorticosterone + 2 oxidized [adrenodoxin] + H2O. The enzyme catalyses cortisol + 2 reduced [adrenodoxin] + O2 + 2 H(+) = 18-hydroxycortisol + 2 oxidized [adrenodoxin] + H2O. It carries out the reaction 11-deoxycortisol + 2 reduced [adrenodoxin] + O2 + 2 H(+) = 18-hydroxy-11-deoxycortisol + 2 oxidized [adrenodoxin] + H2O. It functions in the pathway steroid biosynthesis; glucocorticoid biosynthesis. The protein operates within steroid hormone biosynthesis. Functionally, a cytochrome P450 monooxygenase involved in the biosynthesis of adrenal corticoids. Catalyzes a variety of reactions that are essential for many species, including detoxification, defense, and the formation of endogenous chemicals like steroid hormones. Steroid 11beta, 18- and 19-hydroxylase with preferred regioselectivity at 11beta, then 18, and lastly 19. Catalyzes the hydroxylation of 11-deoxycortisol and 11-deoxycorticosterone (21-hydroxyprogesterone) at 11beta position, yielding cortisol or corticosterone, respectively, but cannot produce aldosterone. Mechanistically, uses molecular oxygen inserting one oxygen atom into a substrate for hydroxylation and reducing the second into a water molecule. Two electrons are provided by NADPH via a two-protein mitochondrial transfer system comprising flavoprotein FDXR (adrenodoxin/ferredoxin reductase) and nonheme iron-sulfur protein FDX1 or FDX2 (adrenodoxin/ferredoxin). Due to its lack of 18-oxidation activity, it is incapable of generating aldosterone. Could also be involved in the androgen metabolic pathway. In Papio hamadryas ursinus (Chacma baboon), this protein is Cytochrome P450 11B1, mitochondrial (CYP11B1).